The following is a 448-amino-acid chain: Adenosylhomocysteinase (448 aa).

3 residues coordinate substrate: Thr-61, Asp-136, and Glu-161. 162 to 164 contributes to the NAD(+) binding site; it reads TTA. 2 residues coordinate substrate: Lys-191 and Asp-195. NAD(+) contacts are provided by residues Asn-196, 225 to 230, Glu-248, Asn-283, 304 to 306, and Asn-360; these read GYGDVG and IGH.

This sequence belongs to the adenosylhomocysteinase family. Requires NAD(+) as cofactor.

It localises to the cytoplasm. It carries out the reaction S-adenosyl-L-homocysteine + H2O = L-homocysteine + adenosine. The protein operates within amino-acid biosynthesis; L-homocysteine biosynthesis; L-homocysteine from S-adenosyl-L-homocysteine: step 1/1. In terms of biological role, may play a key role in the regulation of the intracellular concentration of adenosylhomocysteine. This is Adenosylhomocysteinase from Rhodopirellula baltica (strain DSM 10527 / NCIMB 13988 / SH1).